The chain runs to 95 residues: Cystatin-A2 (95 aa).

A Secondary area of contact motif is present at residues 47–51 (QLVNG).

The protein belongs to the cystatin family.

It is found in the cytoplasm. Intracellular thiol proteinase inhibitor. Inhibits cathepsin B, but not papain. In Dictyostelium discoideum (Social amoeba), this protein is Cystatin-A2 (cpiB).